The primary structure comprises 454 residues: Bifunctional protein GlmU (454 aa).

Residues 1-226 form a pyrophosphorylase region; that stretch reads MALNVVILAA…AIEVEGANNR (226 aa). Residues 8–11, Lys22, Gln73, 78–79, 100–102, Gly137, Glu151, Asn166, and Asn224 contribute to the UDP-N-acetyl-alpha-D-glucosamine site; these read LAAG, GT, and YGD. Asp102 contacts Mg(2+). Asn224 lines the Mg(2+) pocket. A linker region spans residues 227–247; that stretch reads VQLAQLERAYQAREAEKLMIA. The N-acetyltransferase stretch occupies residues 248-454; that stretch reads GANLRDPSRI…GWQRPVKIKK (207 aa). UDP-N-acetyl-alpha-D-glucosamine contacts are provided by Arg330 and Lys348. His360 acts as the Proton acceptor in catalysis. Residues Tyr363 and Asn374 each coordinate UDP-N-acetyl-alpha-D-glucosamine. Acetyl-CoA-binding positions include Ala377, 383-384, Ser402, Ala420, and Arg437; that span reads NY.

In the N-terminal section; belongs to the N-acetylglucosamine-1-phosphate uridyltransferase family. The protein in the C-terminal section; belongs to the transferase hexapeptide repeat family. In terms of assembly, homotrimer. Requires Mg(2+) as cofactor.

It is found in the cytoplasm. The catalysed reaction is alpha-D-glucosamine 1-phosphate + acetyl-CoA = N-acetyl-alpha-D-glucosamine 1-phosphate + CoA + H(+). It carries out the reaction N-acetyl-alpha-D-glucosamine 1-phosphate + UTP + H(+) = UDP-N-acetyl-alpha-D-glucosamine + diphosphate. It participates in nucleotide-sugar biosynthesis; UDP-N-acetyl-alpha-D-glucosamine biosynthesis; N-acetyl-alpha-D-glucosamine 1-phosphate from alpha-D-glucosamine 6-phosphate (route II): step 2/2. Its pathway is nucleotide-sugar biosynthesis; UDP-N-acetyl-alpha-D-glucosamine biosynthesis; UDP-N-acetyl-alpha-D-glucosamine from N-acetyl-alpha-D-glucosamine 1-phosphate: step 1/1. The protein operates within bacterial outer membrane biogenesis; LPS lipid A biosynthesis. Its function is as follows. Catalyzes the last two sequential reactions in the de novo biosynthetic pathway for UDP-N-acetylglucosamine (UDP-GlcNAc). The C-terminal domain catalyzes the transfer of acetyl group from acetyl coenzyme A to glucosamine-1-phosphate (GlcN-1-P) to produce N-acetylglucosamine-1-phosphate (GlcNAc-1-P), which is converted into UDP-GlcNAc by the transfer of uridine 5-monophosphate (from uridine 5-triphosphate), a reaction catalyzed by the N-terminal domain. The chain is Bifunctional protein GlmU from Shewanella oneidensis (strain ATCC 700550 / JCM 31522 / CIP 106686 / LMG 19005 / NCIMB 14063 / MR-1).